A 359-amino-acid chain; its full sequence is Phospho-N-acetylmuramoyl-pentapeptide-transferase (359 aa).

Helical transmembrane passes span 21-41, 73-93, 98-118, 143-163, 166-186, 202-222, 237-257, 261-281, 286-306, and 336-356; these read YITF…FLLG, TMGG…WADL, IWVT…DDYL, GICL…VPFF, VAPD…VGTS, PLVI…NAII, VTVF…FNAY, IFMG…VAII, ILLT…IFQV, and KIIV…VSTL.

This sequence belongs to the glycosyltransferase 4 family. MraY subfamily. Mg(2+) serves as cofactor.

Its subcellular location is the cell inner membrane. It carries out the reaction UDP-N-acetyl-alpha-D-muramoyl-L-alanyl-gamma-D-glutamyl-meso-2,6-diaminopimeloyl-D-alanyl-D-alanine + di-trans,octa-cis-undecaprenyl phosphate = di-trans,octa-cis-undecaprenyl diphospho-N-acetyl-alpha-D-muramoyl-L-alanyl-D-glutamyl-meso-2,6-diaminopimeloyl-D-alanyl-D-alanine + UMP. Its pathway is cell wall biogenesis; peptidoglycan biosynthesis. Functionally, catalyzes the initial step of the lipid cycle reactions in the biosynthesis of the cell wall peptidoglycan: transfers peptidoglycan precursor phospho-MurNAc-pentapeptide from UDP-MurNAc-pentapeptide onto the lipid carrier undecaprenyl phosphate, yielding undecaprenyl-pyrophosphoryl-MurNAc-pentapeptide, known as lipid I. This chain is Phospho-N-acetylmuramoyl-pentapeptide-transferase, found in Desulfosudis oleivorans (strain DSM 6200 / JCM 39069 / Hxd3) (Desulfococcus oleovorans).